The following is a 223-amino-acid chain: Probable iron-sulfur cluster repair protein HI_1677 (223 aa).

This sequence belongs to the RIC family.

The protein resides in the cytoplasm. In terms of biological role, di-iron-containing protein involved in the repair of iron-sulfur clusters. The chain is Probable iron-sulfur cluster repair protein HI_1677 from Haemophilus influenzae (strain ATCC 51907 / DSM 11121 / KW20 / Rd).